Consider the following 418-residue polypeptide: UDP-N-acetylglucosamine 1-carboxyvinyltransferase (418 aa).

Position 22-23 (22-23 (KN)) interacts with phosphoenolpyruvate. UDP-N-acetyl-alpha-D-glucosamine is bound at residue Arg-92. Cys-116 functions as the Proton donor in the catalytic mechanism. Position 116 is a 2-(S-cysteinyl)pyruvic acid O-phosphothioketal (Cys-116). Residues Asp-306 and Ile-328 each contribute to the UDP-N-acetyl-alpha-D-glucosamine site.

It belongs to the EPSP synthase family. MurA subfamily.

The protein localises to the cytoplasm. It catalyses the reaction phosphoenolpyruvate + UDP-N-acetyl-alpha-D-glucosamine = UDP-N-acetyl-3-O-(1-carboxyvinyl)-alpha-D-glucosamine + phosphate. It functions in the pathway cell wall biogenesis; peptidoglycan biosynthesis. Functionally, cell wall formation. Adds enolpyruvyl to UDP-N-acetylglucosamine. The sequence is that of UDP-N-acetylglucosamine 1-carboxyvinyltransferase from Shewanella amazonensis (strain ATCC BAA-1098 / SB2B).